The primary structure comprises 158 residues: 6,7-dimethyl-8-ribityllumazine synthase (158 aa).

5-amino-6-(D-ribitylamino)uracil contacts are provided by residues Phe22, 57-59 (AVE), and 81-83 (AVI). Residue 86 to 87 (GT) coordinates (2S)-2-hydroxy-3-oxobutyl phosphate. His89 functions as the Proton donor in the catalytic mechanism. Phe114 serves as a coordination point for 5-amino-6-(D-ribitylamino)uracil. Arg128 lines the (2S)-2-hydroxy-3-oxobutyl phosphate pocket.

It belongs to the DMRL synthase family. In terms of assembly, forms an icosahedral capsid composed of 60 subunits, arranged as a dodecamer of pentamers.

It catalyses the reaction (2S)-2-hydroxy-3-oxobutyl phosphate + 5-amino-6-(D-ribitylamino)uracil = 6,7-dimethyl-8-(1-D-ribityl)lumazine + phosphate + 2 H2O + H(+). It functions in the pathway cofactor biosynthesis; riboflavin biosynthesis; riboflavin from 2-hydroxy-3-oxobutyl phosphate and 5-amino-6-(D-ribitylamino)uracil: step 1/2. Functionally, catalyzes the formation of 6,7-dimethyl-8-ribityllumazine by condensation of 5-amino-6-(D-ribitylamino)uracil with 3,4-dihydroxy-2-butanone 4-phosphate. This is the penultimate step in the biosynthesis of riboflavin. The protein is 6,7-dimethyl-8-ribityllumazine synthase of Shewanella piezotolerans (strain WP3 / JCM 13877).